The sequence spans 270 residues: MSRKVFYISDGTAITAEVFGHAVLSQFPVEFEALTIPFVETTQKAEAVKAQINDCFITTGERPLVFHSIVKAEIRDIIYSSECIDYDFLNTFVAPLEDQLGVKAVPVTHRTHGKANHSYEARIDAINYAMENDDGQTLKHIDKADIVLLGVSRCGKTPSSLYLSMQFGIKAANYPFIEDDMDNLKLPEVLKKNKHKLFGLTIDPVRLHEIRQSRMENSRYSSLRQCRIEVKEVEMMYKRERIPFVNTTNHSVEEIATKILDVTGLERHMF.

Residue 150 to 157 participates in ADP binding; the sequence is GVSRCGKT.

Belongs to the pyruvate, phosphate/water dikinase regulatory protein family. PSRP subfamily.

It carries out the reaction [pyruvate, water dikinase] + ADP = [pyruvate, water dikinase]-phosphate + AMP + H(+). It catalyses the reaction [pyruvate, water dikinase]-phosphate + phosphate + H(+) = [pyruvate, water dikinase] + diphosphate. In terms of biological role, bifunctional serine/threonine kinase and phosphorylase involved in the regulation of the phosphoenolpyruvate synthase (PEPS) by catalyzing its phosphorylation/dephosphorylation. In Shewanella loihica (strain ATCC BAA-1088 / PV-4), this protein is Putative phosphoenolpyruvate synthase regulatory protein.